Reading from the N-terminus, the 399-residue chain is Acetate kinase (399 aa).

N7 provides a ligand contact to Mg(2+). K14 is an ATP binding site. Substrate is bound at residue R89. D146 (proton donor/acceptor) is an active-site residue. ATP-binding positions include 206 to 210, 280 to 282, and 328 to 332; these read HLGNG, DMR, and GIGEN. E382 contacts Mg(2+).

It belongs to the acetokinase family. In terms of assembly, homodimer. Mg(2+) serves as cofactor. The cofactor is Mn(2+).

Its subcellular location is the cytoplasm. The catalysed reaction is acetate + ATP = acetyl phosphate + ADP. The protein operates within metabolic intermediate biosynthesis; acetyl-CoA biosynthesis; acetyl-CoA from acetate: step 1/2. Catalyzes the formation of acetyl phosphate from acetate and ATP. Can also catalyze the reverse reaction. This chain is Acetate kinase, found in Campylobacter fetus subsp. fetus (strain 82-40).